We begin with the raw amino-acid sequence, 608 residues long: DNA mismatch repair protein MutL (608 aa).

The protein belongs to the DNA mismatch repair MutL/HexB family.

Functionally, this protein is involved in the repair of mismatches in DNA. It is required for dam-dependent methyl-directed DNA mismatch repair. May act as a 'molecular matchmaker', a protein that promotes the formation of a stable complex between two or more DNA-binding proteins in an ATP-dependent manner without itself being part of a final effector complex. This is DNA mismatch repair protein MutL from Anaeromyxobacter dehalogenans (strain 2CP-C).